Here is a 178-residue protein sequence, read N- to C-terminus: Oligoribonuclease (178 aa).

The Exonuclease domain maps to Leu-7–Leu-168. Residue Tyr-128 is part of the active site.

It belongs to the oligoribonuclease family.

Its subcellular location is the cytoplasm. Its function is as follows. 3'-to-5' exoribonuclease specific for small oligoribonucleotides. In Francisella tularensis subsp. tularensis (strain FSC 198), this protein is Oligoribonuclease.